Consider the following 444-residue polypeptide: Putative F-box protein At1g64540 (444 aa).

The F-box domain maps to Arg4 to Glu50.

This chain is Putative F-box protein At1g64540, found in Arabidopsis thaliana (Mouse-ear cress).